Consider the following 221-residue polypeptide: MGYVRVIYQFPDNLWWNECTNQVYYAQDPMKPERLIGTPSIIQTKLLKILCEYHPAPCPNDQIIKALWPHGFISSESLTQAIKRTRDFLNDEHKTLIENVKLQGYRINIIQVIVSENVVDEADCSQKKSVKERIKIEWGKINVVPYLVFSALYVALLPVIWWSYGQWYQHELAGITHDLRDLARLPGITIQKLSEQKLTFAIDQHQCSVNYEQKTLECTKN.

Positions 5 to 109 (RVIYQFPDNL…VKLQGYRINI (105 aa)) form a DNA-binding region, ompR/PhoB-type. A helical transmembrane segment spans residues 143-163 (VVPYLVFSALYVALLPVIWWS).

Its subcellular location is the cell membrane. Its function is as follows. Involved in TCP pilus biogenesis. The protein is Toxin coregulated pilus biosynthesis protein P (tcpP) of Vibrio cholerae serotype O1 (strain ATCC 39315 / El Tor Inaba N16961).